A 618-amino-acid polypeptide reads, in one-letter code: Chaperone protein HtpG (618 aa).

The segment at 1–331 (MAKHTFQTEV…SEDLPLNVSR (331 aa)) is a; substrate-binding. The segment at 332 to 541 (EILQQNRILA…EDDPNFAMIK (210 aa)) is b. The tract at residues 542 to 618 (MMRQMGNALG…RLNAMLERAI (77 aa)) is c.

This sequence belongs to the heat shock protein 90 family. Homodimer.

The protein resides in the cytoplasm. Molecular chaperone. Has ATPase activity. The chain is Chaperone protein HtpG from Wolinella succinogenes (strain ATCC 29543 / DSM 1740 / CCUG 13145 / JCM 31913 / LMG 7466 / NCTC 11488 / FDC 602W) (Vibrio succinogenes).